The chain runs to 173 residues: Pectinesterase inhibitor 2 (173 aa).

The N-terminal stretch at 1 to 25 is a signal peptide; it reads MAAYLTNRVLMSSLMFFVMTGSLNA. Cysteine 34 and cysteine 43 form a disulfide bridge. 2 N-linked (GlcNAc...) asparagine glycosylation sites follow: asparagine 39 and asparagine 63. A disulfide bridge connects residues cysteine 99 and cysteine 139.

This sequence belongs to the PMEI family. As to quaternary structure, interacts with PPME1. Highest expression in flowers. Expressed exclusively at the pollen tube tip.

It localises to the secreted. Its subcellular location is the extracellular space. The protein localises to the apoplast. Functionally, inhibits pectin methylesterase (PME) from flowers, siliques and pollen tube. The protein is Pectinesterase inhibitor 2 of Arabidopsis thaliana (Mouse-ear cress).